Reading from the N-terminus, the 988-residue chain is MVVTTEAVTSRSERDAEPVQEPLVEKLATEELNILVAVRCRGRNEREIKAKSSVVVDVPDNGVTNEVSINTTDDVGIAAKMNSKTYTVDKVFGPSASQKLVYEEIAEPLFQDFIKGYNCTILVYGMTSTGKTYTMTGDEKLHNGELGDAAGIIPRVLFELFDTLEANKDDYLVKCSFVELYNEELKDLLDSTNTATNSDNKKLRIFDSNVNGTSASGSSSRSSSRNNSPRSAPDNSRAQMLRRKLGRHNTTGNSKISNNNHNKFSRFKQTSQESTRAHASNNHQNVHIPNNNSNNTNQQQSPIDQSASIYIQNLEEFHITSAMEGLQLLQKGLKQRQVASTKMNDFSSRSHSIFTITLYKEQNGELFRVSKMNLVDLAGSENISRSGAMNQRAKEAGSINQSLLTLGRVINSLADKSEHIPFRESKLTRLLQDSLGGNTKTALIATISPAKMTSEETCSTLEYASKAKNIKNKPQLGAFIMKDILVRSITSELAKIKSDLLSTKSKEGVYMSHEHYKDLHYDIECYKTELEESKRAIESLTAQNAMLQQERLSLKDDNACYKANIASLKDNVVTLQSSLKEQITKETNIRSLLKDVQGANEEMKKTIHLFEFKQQELQQSISTFISDEISNIRDTLKKHIEYLQNNGDLKDTEISGNLMRLEKEVVKVIKAAEEEASKSYGECVKMMLKETPRLFESVSGRLDNISKLAEENHSKIAETLSDVSEEYNNLKQYLTNNFFKNNHEELLSHHVQNTYAQLEENSAQLMQNFTMMLDKHIQENKRHMLENILGVTDEVINNELQMFGEQRAKWEKSSALINQCDSVNHSFHQALGSNLVEIRDVVSSSRDNIGATISSIQSRTRNRQSIEEMIQGNDVIRQQITRIKQKNKSLSLFKEHSTETATTSIGSVNKVEGNLKVIMDKVLNDPQLSRGKAEVPDEELHRLEKIPLGITNKENVVDLQHRYPALQEKRKPEDEVLLQAKLQRRNPD.

Residues 33–470 (NILVAVRCRG…LEYASKAKNI (438 aa)) enclose the Kinesin motor domain. 125-132 (GMTSTGKT) contacts ATP. Residues 206–301 (FDSNVNGTSA…NSNNTNQQQS (96 aa)) are disordered. The span at 208–237 (SNVNGTSASGSSSRSSSRNNSPRSAPDNSR) shows a compositional bias: low complexity. The span at 248-280 (HNTTGNSKISNNNHNKFSRFKQTSQESTRAHAS) shows a compositional bias: polar residues. Positions 281–301 (NNHQNVHIPNNNSNNTNQQQS) are enriched in low complexity. Coiled coils occupy residues 514–619 (EHYK…ELQQ) and 707–769 (KLAE…MQNF). The span at 965-974 (ALQEKRKPED) shows a compositional bias: basic and acidic residues. The tract at residues 965 to 988 (ALQEKRKPEDEVLLQAKLQRRNPD) is disordered.

The protein belongs to the TRAFAC class myosin-kinesin ATPase superfamily. Kinesin family. BimC subfamily.

Its subcellular location is the cytoplasm. It is found in the cytoskeleton. It localises to the spindle. Its function is as follows. Elongates the mitotic spindle by interacting with spindle microtubules to generate an outward force pushing spindle poles apart. Following spindle assembly, CIN8 and KIP1 apparently act to oppose a force, possibly generated by KAR3, that draws separated poles back together. In Candida glabrata (strain ATCC 2001 / BCRC 20586 / JCM 3761 / NBRC 0622 / NRRL Y-65 / CBS 138) (Yeast), this protein is Kinesin-like protein CIN8 (CIN8).